The sequence spans 146 residues: Snaclec 1 (146 aa).

An N-terminal signal peptide occupies residues 1 to 23; the sequence is MGRFIFMSFGLLVVFLSLSGTGA. Cystine bridges form between Cys25-Cys36, Cys53-Cys142, and Cys119-Cys134. Residues 32-143 form the C-type lectin domain; that stretch reads YEGHCYRVFQ…CSRTYSFVCK (112 aa).

It belongs to the snaclec family. Heterodimer; disulfide-linked. As to expression, expressed by the venom gland.

The protein resides in the secreted. Interferes with one step of hemostasis (modulation of platelet aggregation, or coagulation cascade, for example). This is Snaclec 1 from Sistrurus catenatus edwardsii (Desert massasauga).